A 2234-amino-acid chain; its full sequence is RNA-directed RNA polymerase L (2234 aa).

The tract at residues 26–283 is endonuclease; the sequence is ITVVTSQTEM…INLSDEKLSC (258 aa). Glu51, Asp89, and Glu102 together coordinate Mn(2+). Lys115 is a catalytic residue. Basic and acidic residues predominate over residues 879–891; the sequence is KRDDHMKDSEDSK. Disordered stretches follow at residues 879–898 and 927–949; these read KRDDHMKDSEDSKQNLSSDL and KLKEKTEARQSSSGSSLKNQQKR. Positions 935–945 are enriched in polar residues; that stretch reads RQSSSGSSLKN. Residues 1184-1383 enclose the RdRp catalytic domain; sequence MEMKMSVNLG…FISSKFNKFV (200 aa). Asp1342 is a binding site for Mg(2+).

It belongs to the Bunyavirales RNA polymerase family. As to quaternary structure, homomultimer; the oligomeric structure is essential for the polymerase activity. Interacts with nucleoprotein N. Interacts with protein Z; this interaction inhibits viral transcription and replication, Z partially blocks the product exit tunnel for the releasing nascent RNA product. Mn(2+) serves as cofactor. Mg(2+) is required as a cofactor.

It is found in the virion. It localises to the host cytoplasm. The enzyme catalyses RNA(n) + a ribonucleoside 5'-triphosphate = RNA(n+1) + diphosphate. Functionally, RNA-dependent RNA polymerase, which is responsible for the replication and transcription of the viral RNA genome using antigenomic RNA as an intermediate. During transcription, synthesizes subgenomic RNAs and assures their capping by a cap-snatching mechanism, which involves the endonuclease activity cleaving the host capped pre-mRNAs. These short capped RNAs are then used as primers for viral transcription. The 3'-end of subgenomic mRNAs molecules are heterogeneous and not polyadenylated. The replicase function is to direct synthesis of antigenomic and genomic RNA which are encapsidated and non capped. As a consequence of the use of the same enzyme for both transcription and replication, these mechanisms need to be well coordinated. These processes may be regulated by proteins N and Z in a dose-dependent manner. Z protein inhibits the viral polymerase L und thus the viral transcription and RNA synthesis. This is RNA-directed RNA polymerase L from Bolomys (OLVV).